The primary structure comprises 356 residues: S-adenosylmethionine:tRNA ribosyltransferase-isomerase (356 aa).

Belongs to the QueA family. Monomer.

The protein localises to the cytoplasm. The catalysed reaction is 7-aminomethyl-7-carbaguanosine(34) in tRNA + S-adenosyl-L-methionine = epoxyqueuosine(34) in tRNA + adenine + L-methionine + 2 H(+). Its pathway is tRNA modification; tRNA-queuosine biosynthesis. Transfers and isomerizes the ribose moiety from AdoMet to the 7-aminomethyl group of 7-deazaguanine (preQ1-tRNA) to give epoxyqueuosine (oQ-tRNA). The sequence is that of S-adenosylmethionine:tRNA ribosyltransferase-isomerase from Escherichia coli (strain 55989 / EAEC).